The chain runs to 228 residues: Mitochondrial assembly of ribosomal large subunit protein 1 (228 aa).

The interval 53–77 (SLTRGLHHGPQPEERTAGDARLQPG) is disordered.

Belongs to the Iojap/RsfS family. In terms of assembly, associates with the mitochondrial ribosome large subunit (39S) via interaction with MRPL12 and/or MRPL14. The interaction generates steric hindrance that is expected to prevent premature association of the 28S and 39S ribosomal subunits. Identified in a complex composed of MALSU1, MIEF1 upstream open reading frame protein and NDUFAB1; within the trimeric complex, MIEF1 upstream open reading frame protein functions as a bridging scaffold that interacts with MALSU1 on one side, and with NDUFAB1 on the other side. Interacts with MRPL12 and MRPL14.

It localises to the mitochondrion matrix. Required for normal mitochondrial ribosome function and mitochondrial translation. May play a role in ribosome biogenesis by preventing premature association of the 28S and 39S ribosomal subunits. Interacts with mitochondrial ribosomal protein uL14m (MRPL14), probably blocking formation of intersubunit bridge B8, preventing association of the 28S and 39S ribosomal subunits. Addition to isolated mitochondrial ribosomal subunits partially inhibits translation, probably by interfering with the association of the 28S and 39S ribosomal subunits and the formation of functional ribosomes. May also participate in the assembly and/or regulation of the stability of the large subunit of the mitochondrial ribosome. May function as a ribosomal silencing factor. The chain is Mitochondrial assembly of ribosomal large subunit protein 1 (Malsu1) from Mus musculus (Mouse).